The chain runs to 318 residues: Sol locus transcriptional repressor (318 aa).

4 TPR repeats span residues Ala65 to Thr98, Ile99 to Val132, Gly133 to Asn166, and Ser167 to Lys199.

Its function is as follows. Transcriptional repressor of the sol locus (adhE/aad, ctfA, ctfB and adc) genes for butanol and acetone formation. The protein is Sol locus transcriptional repressor (solR) of Clostridium acetobutylicum (strain ATCC 824 / DSM 792 / JCM 1419 / IAM 19013 / LMG 5710 / NBRC 13948 / NRRL B-527 / VKM B-1787 / 2291 / W).